A 369-amino-acid polypeptide reads, in one-letter code: MGLAAAKNKRKLGTDPNNTKWSRNETTFGQKILRAQGWQPGEFLGAKDAAHAVHHTEASSSHIKVTLKDDNLGLGAKRNNGDECTGLFDFQHLLGRLNGKSEDVLEAEKQKRENHIRNHYLEQKIGTIRFVRGGWLVGDVVKEKVTEEDGVPQSDTVDQQVETVPSQDTKDAEPTKRKSKKRKADSDEEDEKEEKKDKKVKKRKTDTEAETDSESSRSKKKEKKDKKEKKDQKEKKDKKDKRKLKDAKQSEESSSDDLESSATETKKSKKDKKKEKKEKKDKKKDKKEKKRKEKELSDSATESEDSKSKAQKRTKDGAEIETSTPGGSGTSTPTVTSSTRFLARQRFIAQKKMAFTDSAALNQIFMIKS.

Positions 1–23 are disordered; it reads MGLAAAKNKRKLGTDPNNTKWSR. Residues 25–79 enclose the G-patch domain; the sequence is ETTFGQKILRAQGWQPGEFLGAKDAAHAVHHTEASSSHIKVTLKDDNLGLGAKRN. The tract at residues 147 to 338 is disordered; sequence EEDGVPQSDT…GTSTPTVTSS (192 aa). Positions 153 to 167 are enriched in polar residues; sequence QSDTVDQQVETVPSQ. Basic residues predominate over residues 218-227; sequence SKKKEKKDKK. Basic and acidic residues predominate over residues 228 to 237; sequence EKKDQKEKKD. The segment covering 267–292 has biased composition (basic residues); the sequence is KSKKDKKKEKKEKKDKKKDKKEKKRK. Residues 304–318 are compositionally biased toward basic and acidic residues; it reads EDSKSKAQKRTKDGA. Positions 322–338 are enriched in low complexity; that stretch reads TSTPGGSGTSTPTVTSS.

Belongs to the PINX1 family.

The protein localises to the nucleus. It localises to the nucleolus. Functionally, involved in rRNA-processing at A0, A1 and A2 sites and negatively regulates telomerase. The sequence is that of Protein pxr-1 (pxr-1) from Neurospora crassa (strain ATCC 24698 / 74-OR23-1A / CBS 708.71 / DSM 1257 / FGSC 987).